A 153-amino-acid polypeptide reads, in one-letter code: MIALIQRVAQARVTVEGRTTGEIGAGLLALVCAERGDTEAQAERLLAKMLSYRVFSDAAGKMNLPVQNMDGNGNAGGLLVVSQFTLAADTNSGTRPSFTPAASPEDGRRLYEHFVAQARAAHPQVQTGEFGAMMQVSLVNDGPVTFWLRVPPA.

Positions 142 to 143 match the Gly-cisPro motif, important for rejection of L-amino acids motif; the sequence is GP.

It belongs to the DTD family. As to quaternary structure, homodimer.

It is found in the cytoplasm. It catalyses the reaction glycyl-tRNA(Ala) + H2O = tRNA(Ala) + glycine + H(+). The enzyme catalyses a D-aminoacyl-tRNA + H2O = a tRNA + a D-alpha-amino acid + H(+). Its function is as follows. An aminoacyl-tRNA editing enzyme that deacylates mischarged D-aminoacyl-tRNAs. Also deacylates mischarged glycyl-tRNA(Ala), protecting cells against glycine mischarging by AlaRS. Acts via tRNA-based rather than protein-based catalysis; rejects L-amino acids rather than detecting D-amino acids in the active site. By recycling D-aminoacyl-tRNA to D-amino acids and free tRNA molecules, this enzyme counteracts the toxicity associated with the formation of D-aminoacyl-tRNA entities in vivo and helps enforce protein L-homochirality. This is D-aminoacyl-tRNA deacylase from Cupriavidus necator (strain ATCC 17699 / DSM 428 / KCTC 22496 / NCIMB 10442 / H16 / Stanier 337) (Ralstonia eutropha).